A 464-amino-acid polypeptide reads, in one-letter code: Soluble pyridine nucleotide transhydrogenase (464 aa).

Residue 35-44 coordinates FAD; it reads DSRRQVGGNC.

The protein belongs to the class-I pyridine nucleotide-disulfide oxidoreductase family. The cofactor is FAD.

The protein localises to the cytoplasm. It catalyses the reaction NAD(+) + NADPH = NADH + NADP(+). Conversion of NADPH, generated by peripheral catabolic pathways, to NADH, which can enter the respiratory chain for energy generation. This Pseudomonas fluorescens (strain ATCC BAA-477 / NRRL B-23932 / Pf-5) protein is Soluble pyridine nucleotide transhydrogenase.